The chain runs to 308 residues: Ribosomal RNA large subunit methyltransferase F (308 aa).

This sequence belongs to the methyltransferase superfamily. METTL16/RlmF family.

It localises to the cytoplasm. It catalyses the reaction adenosine(1618) in 23S rRNA + S-adenosyl-L-methionine = N(6)-methyladenosine(1618) in 23S rRNA + S-adenosyl-L-homocysteine + H(+). Functionally, specifically methylates the adenine in position 1618 of 23S rRNA. This Escherichia fergusonii (strain ATCC 35469 / DSM 13698 / CCUG 18766 / IAM 14443 / JCM 21226 / LMG 7866 / NBRC 102419 / NCTC 12128 / CDC 0568-73) protein is Ribosomal RNA large subunit methyltransferase F.